Consider the following 479-residue polypeptide: Sulfate adenylyltransferase subunit 1 (479 aa).

One can recognise a tr-type G domain in the interval Lys-25–Arg-239. The segment at Gly-34–Ser-41 is G1. GTP is bound at residue Gly-34–Ser-41. A G2 region spans residues Gly-92–Asp-96. Positions Asp-113–Gly-116 are G3. GTP is bound by residues Asp-113–His-117 and Asn-168–Asp-171. The G4 stretch occupies residues Asn-168–Asp-171. Residues Ser-206–Leu-208 form a G5 region.

It belongs to the TRAFAC class translation factor GTPase superfamily. Classic translation factor GTPase family. CysN/NodQ subfamily. Heterodimer composed of CysD, the smaller subunit, and CysN.

The enzyme catalyses sulfate + ATP + H(+) = adenosine 5'-phosphosulfate + diphosphate. The protein operates within sulfur metabolism; hydrogen sulfide biosynthesis; sulfite from sulfate: step 1/3. Functionally, with CysD forms the ATP sulfurylase (ATPS) that catalyzes the adenylation of sulfate producing adenosine 5'-phosphosulfate (APS) and diphosphate, the first enzymatic step in sulfur assimilation pathway. APS synthesis involves the formation of a high-energy phosphoric-sulfuric acid anhydride bond driven by GTP hydrolysis by CysN coupled to ATP hydrolysis by CysD. The sequence is that of Sulfate adenylyltransferase subunit 1 from Salmonella heidelberg (strain SL476).